The following is a 365-amino-acid chain: Protein RecA (365 aa).

Residue 81 to 88 (GPESSGKT) participates in ATP binding.

It belongs to the RecA family.

It is found in the cytoplasm. In terms of biological role, can catalyze the hydrolysis of ATP in the presence of single-stranded DNA, the ATP-dependent uptake of single-stranded DNA by duplex DNA, and the ATP-dependent hybridization of homologous single-stranded DNAs. It interacts with LexA causing its activation and leading to its autocatalytic cleavage. This Borreliella afzelii (strain PKo) (Borrelia afzelii) protein is Protein RecA.